Consider the following 275-residue polypeptide: Dermonecrotic toxin LamSicTox-alphaIV1i (275 aa).

His-5 is a catalytic residue. Residues Glu-25 and Asp-27 each contribute to the Mg(2+) site. His-41 functions as the Nucleophile in the catalytic mechanism. Cystine bridges form between Cys-45–Cys-51 and Cys-47–Cys-192. Residue Asp-85 coordinates Mg(2+).

This sequence belongs to the arthropod phospholipase D family. Class II subfamily. The cofactor is Mg(2+). In terms of tissue distribution, expressed by the venom gland.

It is found in the secreted. The catalysed reaction is an N-(acyl)-sphingosylphosphocholine = an N-(acyl)-sphingosyl-1,3-cyclic phosphate + choline. It catalyses the reaction an N-(acyl)-sphingosylphosphoethanolamine = an N-(acyl)-sphingosyl-1,3-cyclic phosphate + ethanolamine. It carries out the reaction a 1-acyl-sn-glycero-3-phosphocholine = a 1-acyl-sn-glycero-2,3-cyclic phosphate + choline. The enzyme catalyses a 1-acyl-sn-glycero-3-phosphoethanolamine = a 1-acyl-sn-glycero-2,3-cyclic phosphate + ethanolamine. Functionally, dermonecrotic toxins cleave the phosphodiester linkage between the phosphate and headgroup of certain phospholipids (sphingolipid and lysolipid substrates), forming an alcohol (often choline) and a cyclic phosphate. This toxin acts on sphingomyelin (SM). It may also act on ceramide phosphoethanolamine (CPE), lysophosphatidylcholine (LPC) and lysophosphatidylethanolamine (LPE), but not on lysophosphatidylserine (LPS), and lysophosphatidylglycerol (LPG). It acts by transphosphatidylation, releasing exclusively cyclic phosphate products as second products. Induces dermonecrosis, hemolysis, increased vascular permeability, edema, inflammatory response, and platelet aggregation. The protein is Dermonecrotic toxin LamSicTox-alphaIV1i of Loxosceles amazonica (Recluse spider).